Consider the following 118-residue polypeptide: Large ribosomal subunit protein bL20 (118 aa).

The protein belongs to the bacterial ribosomal protein bL20 family.

In terms of biological role, binds directly to 23S ribosomal RNA and is necessary for the in vitro assembly process of the 50S ribosomal subunit. It is not involved in the protein synthesizing functions of that subunit. This chain is Large ribosomal subunit protein bL20, found in Francisella tularensis subsp. novicida (strain U112).